Consider the following 127-residue polypeptide: Aspartate 1-decarboxylase (127 aa).

The active-site Schiff-base intermediate with substrate; via pyruvic acid is the Ser25. Residue Ser25 is modified to Pyruvic acid (Ser). Thr57 is a binding site for substrate. Catalysis depends on Tyr58, which acts as the Proton donor. Position 73-75 (73-75) interacts with substrate; sequence GAA.

Belongs to the PanD family. As to quaternary structure, heterooctamer of four alpha and four beta subunits. Requires pyruvate as cofactor. Post-translationally, is synthesized initially as an inactive proenzyme, which is activated by self-cleavage at a specific serine bond to produce a beta-subunit with a hydroxyl group at its C-terminus and an alpha-subunit with a pyruvoyl group at its N-terminus.

The protein localises to the cytoplasm. The enzyme catalyses L-aspartate + H(+) = beta-alanine + CO2. It participates in cofactor biosynthesis; (R)-pantothenate biosynthesis; beta-alanine from L-aspartate: step 1/1. In terms of biological role, catalyzes the pyruvoyl-dependent decarboxylation of aspartate to produce beta-alanine. In Exiguobacterium sibiricum (strain DSM 17290 / CCUG 55495 / CIP 109462 / JCM 13490 / 255-15), this protein is Aspartate 1-decarboxylase.